Here is an 816-residue protein sequence, read N- to C-terminus: Chitin synthase 1 (816 aa).

The interval 1-21 (MLSQGEILRNPSRTRLQRPPK) is disordered. Over 1–32 (MLSQGEILRNPSRTRLQRPPKSRSERKGWWYR) the chain is Cytoplasmic. A helical transmembrane segment spans residues 33-53 (VTIFLTCLIPNFMLRCFGMTT). Over 54 to 63 (PEVQHAWREK) the chain is Extracellular. A helical transmembrane segment spans residues 64–84 (VALCICIFFCWIILGFTTYGM). Residues 85-240 (NTIICKGSNQ…TPGCLLADTM (156 aa)) are Cytoplasmic-facing. Residues 241–261 (FWITTISIFGLIITKFLLGFF) form a helical membrane-spanning segment. At 262 to 697 (YSWYAKRRPK…QLVVVMELFG (436 aa)) the chain is on the extracellular side. 2 N-linked (GlcNAc...) asparagine glycosylation sites follow: Asn319 and Asn664. The chain crosses the membrane as a helical span at residues 698–718 (TLVLPAAIIFTFVMIAVSILI). Topologically, residues 719 to 720 (EP) are cytoplasmic. A helical transmembrane segment spans residues 721 to 741 (AWVPLIMLVGIFGLPAVLILI). At 742–745 (TTME) the chain is on the extracellular side. Residues 746–766 (IQYVFWCLVYILSIPIWNFVL) form a helical membrane-spanning segment. Topologically, residues 767-816 (PTYAFWHFDNFSWGDTRKVDGEGKEDEEGEFDHTKIRIRELEEFLSEANK) are cytoplasmic.

This sequence belongs to the chitin synthase family. Class IV subfamily.

The protein localises to the cell membrane. It carries out the reaction [(1-&gt;4)-N-acetyl-beta-D-glucosaminyl](n) + UDP-N-acetyl-alpha-D-glucosamine = [(1-&gt;4)-N-acetyl-beta-D-glucosaminyl](n+1) + UDP + H(+). Polymerizes chitin, a structural polymer of the cell wall and septum, by transferring the sugar moiety of UDP-GlcNAc to the non-reducing end of the growing chitin polymer. This chain is Chitin synthase 1 (CHS1), found in Encephalitozoon cuniculi (strain GB-M1) (Microsporidian parasite).